The following is a 288-amino-acid chain: Diaminopimelate epimerase (288 aa).

Residues N17, Q47, and N67 each coordinate substrate. The active-site Proton donor is C76. Substrate-binding positions include 77 to 78 (GN), N163, N196, and 214 to 215 (ER). The Proton acceptor role is filled by C223. Residue 224 to 225 (GS) coordinates substrate.

It belongs to the diaminopimelate epimerase family. As to quaternary structure, homodimer.

Its subcellular location is the cytoplasm. The enzyme catalyses (2S,6S)-2,6-diaminopimelate = meso-2,6-diaminopimelate. Its pathway is amino-acid biosynthesis; L-lysine biosynthesis via DAP pathway; DL-2,6-diaminopimelate from LL-2,6-diaminopimelate: step 1/1. In terms of biological role, catalyzes the stereoinversion of LL-2,6-diaminopimelate (L,L-DAP) to meso-diaminopimelate (meso-DAP), a precursor of L-lysine and an essential component of the bacterial peptidoglycan. This is Diaminopimelate epimerase from Rhodopseudomonas palustris (strain BisB18).